The sequence spans 292 residues: GTP cyclohydrolase FolE2 (292 aa).

It belongs to the GTP cyclohydrolase IV family.

The catalysed reaction is GTP + H2O = 7,8-dihydroneopterin 3'-triphosphate + formate + H(+). Its pathway is cofactor biosynthesis; 7,8-dihydroneopterin triphosphate biosynthesis; 7,8-dihydroneopterin triphosphate from GTP: step 1/1. Functionally, converts GTP to 7,8-dihydroneopterin triphosphate. The protein is GTP cyclohydrolase FolE2 of Macrococcus caseolyticus (strain JCSC5402) (Macrococcoides caseolyticum).